The primary structure comprises 304 residues: ATP synthase gamma chain (304 aa).

Belongs to the ATPase gamma chain family. In terms of assembly, F-type ATPases have 2 components, CF(1) - the catalytic core - and CF(0) - the membrane proton channel. CF(1) has five subunits: alpha(3), beta(3), gamma(1), delta(1), epsilon(1). CF(0) has three main subunits: a, b and c.

It is found in the cell membrane. Its function is as follows. Produces ATP from ADP in the presence of a proton gradient across the membrane. The gamma chain is believed to be important in regulating ATPase activity and the flow of protons through the CF(0) complex. The sequence is that of ATP synthase gamma chain from Thermobifida fusca (strain YX).